A 32-amino-acid chain; its full sequence is Ranatuerin-3 (32 aa).

A disulfide bridge connects residues C23 and C28.

Belongs to the frog skin active peptide (FSAP) family. Ranatuerin subfamily. Expressed by the skin glands.

It localises to the secreted. Its function is as follows. Antibacterial activity against Gram-positive bacterium S.aureus (MIC=60 uM). Shows no detectable hemolytic activity towards human erythrocytes. In Aquarana catesbeiana (American bullfrog), this protein is Ranatuerin-3.